The primary structure comprises 157 residues: Small ribosomal subunit protein uS9 (157 aa).

The protein belongs to the universal ribosomal protein uS9 family.

The chain is Small ribosomal subunit protein uS9 from Caulobacter vibrioides (strain ATCC 19089 / CIP 103742 / CB 15) (Caulobacter crescentus).